The primary structure comprises 602 residues: Aspartate--tRNA(Asp/Asn) ligase (602 aa).

Glu176 is a binding site for L-aspartate. An aspartate region spans residues 200-203 (QQFK). L-aspartate contacts are provided by Arg222 and His452. 222-224 (RDE) is a binding site for ATP. ATP is bound at residue Glu490. Arg497 serves as a coordination point for L-aspartate. 542–545 (GIDR) provides a ligand contact to ATP.

The protein belongs to the class-II aminoacyl-tRNA synthetase family. Type 1 subfamily. In terms of assembly, homodimer.

The protein localises to the cytoplasm. It catalyses the reaction tRNA(Asx) + L-aspartate + ATP = L-aspartyl-tRNA(Asx) + AMP + diphosphate. Aspartyl-tRNA synthetase with relaxed tRNA specificity since it is able to aspartylate not only its cognate tRNA(Asp) but also tRNA(Asn). Reaction proceeds in two steps: L-aspartate is first activated by ATP to form Asp-AMP and then transferred to the acceptor end of tRNA(Asp/Asn). The polypeptide is Aspartate--tRNA(Asp/Asn) ligase (Rickettsia canadensis (strain McKiel)).